A 292-amino-acid chain; its full sequence is Polyamine aminopropyltransferase 1 (292 aa).

The region spanning 1–244 is the PABS domain; the sequence is MELGMFRLNI…YVNSFVFASD (244 aa). Q35 is a binding site for S-methyl-5'-thioadenosine. H66 and E90 together coordinate spermidine. Residues D110 and 142-143 contribute to the S-methyl-5'-thioadenosine site; that span reads DG. Catalysis depends on D163, which acts as the Proton acceptor.

The protein belongs to the spermidine/spermine synthase family. Homodimer or homotetramer.

It is found in the cytoplasm. It catalyses the reaction norspermine + S-adenosyl 3-(methylsulfanyl)propylamine = caldopentamine + S-methyl-5'-thioadenosine + 2 H(+). It carries out the reaction norspermidine + S-adenosyl 3-(methylsulfanyl)propylamine = norspermine + S-methyl-5'-thioadenosine + H(+). The catalysed reaction is S-adenosyl 3-(methylsulfanyl)propylamine + spermidine = thermospermine + S-methyl-5'-thioadenosine + H(+). In terms of biological role, involved in the biosynthesis of polyamines which are thought to support the growth of thermophilic microorganisms under high-temperature conditions. It seems that long-chain and branched-chain of polyamines effectively stabilize DNA and RNA, respectively. Catalyzes the irreversible transfer of a propylamine group from the amino donor S-adenosylmethioninamine (decarboxy-AdoMet) to norspermidine, spermidine and norspermine to yield norspermine, thermospermine and caldopentamine, respectively. It can also synthesize sym-norspermidine (bis(3-aminopropyl)amine) from 1,3-diaminopropane with a very low activity. The biosynthesis of caldohexamine and caldoheptamine from caldopentamine has been also observed. In Hyperthermus butylicus (strain DSM 5456 / JCM 9403 / PLM1-5), this protein is Polyamine aminopropyltransferase 1.